The primary structure comprises 447 residues: Phosphoglucosamine mutase (447 aa).

Ser104 serves as the catalytic Phosphoserine intermediate. Mg(2+)-binding residues include Ser104, Asp243, Asp245, and Asp247. Phosphoserine is present on Ser104.

This sequence belongs to the phosphohexose mutase family. Requires Mg(2+) as cofactor. Post-translationally, activated by phosphorylation.

It catalyses the reaction alpha-D-glucosamine 1-phosphate = D-glucosamine 6-phosphate. Its function is as follows. Catalyzes the conversion of glucosamine-6-phosphate to glucosamine-1-phosphate. The sequence is that of Phosphoglucosamine mutase from Corynebacterium glutamicum (strain R).